Here is a 348-residue protein sequence, read N- to C-terminus: Short-wave-sensitive opsin 1 (348 aa).

At 1 to 33 the chain is on the extracellular side; sequence MRKMSEEEFYLFKNISSVGPWDGPQYHIAPVWA. An N-linked (GlcNAc...) asparagine glycan is attached at Asn-14. Residues 34–58 traverse the membrane as a helical segment; the sequence is FYLQAAFMGTVFLIGFPLNAMVLVA. The Cytoplasmic segment spans residues 59–70; that stretch reads TLRYKKLRQPLN. Residues 71-96 form a helical membrane-spanning segment; that stretch reads YILVNVSFGGFLLCIFSVFPVFVASC. Topologically, residues 97–110 are extracellular; that stretch reads NGYFVFGRHVCALE. A disulfide bridge connects residues Cys-107 and Cys-184. Residues 111 to 130 traverse the membrane as a helical segment; the sequence is GFLGTVAGLVTGWSLAFLAF. Over 131 to 149 the chain is Cytoplasmic; the sequence is ERYIVICKPFGNFRFSSKH. A helical membrane pass occupies residues 150-173; sequence ALTVVLATWTIGIGVSIPPFFGWS. Over 174–199 the chain is Extracellular; that stretch reads RFIPEGLQCSCGPDWYTVGTKYRSES. A helical transmembrane segment spans residues 200 to 227; sequence YTWFLFIFCFIVPLSLICFSYTQLLRAL. At 228–249 the chain is on the cytoplasmic side; the sequence is KAVAAQQQESATTQKAEREVSR. A helical membrane pass occupies residues 250–273; the sequence is MVVVMVGSFCVCYVPYAAFAMYMV. The Extracellular segment spans residues 274 to 281; it reads NNRNHGLD. Residues 282-306 form a helical membrane-spanning segment; the sequence is LRLVTIPSFFSKSACIYNPIIYCFM. N6-(retinylidene)lysine is present on Lys-293. Over 307-348 the chain is Cytoplasmic; it reads NKQFQACIMKMVCGKAMTDESDTCSSQKTEVSTVSSTQVGPN.

It belongs to the G-protein coupled receptor 1 family. Opsin subfamily. Post-translationally, phosphorylated on some or all of the serine and threonine residues present in the C-terminal region.

The protein localises to the cell membrane. It is found in the photoreceptor inner segment. Its subcellular location is the cell projection. The protein resides in the cilium. It localises to the photoreceptor outer segment. The protein localises to the cytoplasm. It is found in the perinuclear region. In terms of biological role, visual pigments are the light-absorbing molecules that mediate vision. They consist of an apoprotein, opsin, covalently linked to cis-retinal. Required for the maintenance of cone outer segment organization in the ventral retina, but not essential for the maintenance of functioning cone photoreceptors. Involved in ensuring correct abundance and localization of retinal membrane proteins. May increase spectral sensitivity in dim light. This Pan paniscus (Pygmy chimpanzee) protein is Short-wave-sensitive opsin 1 (OPN1SW).